The following is a 498-amino-acid chain: U4/U6 small nuclear ribonucleoprotein Prp31 (498 aa).

Coiled coils occupy residues 84–119 (EAAP…KYSK) and 180–214 (DEEL…MSFI). Residues 214 to 332 (IAPNLSIIVG…IERKFDKWQE (119 aa)) form the Nop domain. A disordered region spans residues 333–356 (PPPVKQVKPLPAPLDGQRKKRGGR). A Nuclear localization signal (NLS) motif is present at residues 350–363 (RKKRGGRRYRKMKE).

The protein belongs to the PRP31 family. In terms of assembly, identified in the spliceosome B complex. Component of the U4/U6-U5 tri-snRNP complex. Component of some MLL1/MLL complex.

The protein localises to the nucleus. Its subcellular location is the nucleus speckle. The protein resides in the cajal body. Its function is as follows. Involved in pre-mRNA splicing as component of the spliceosome. Required for the assembly of the U4/U5/U6 tri-snRNP complex, one of the building blocks of the spliceosome. In Xenopus tropicalis (Western clawed frog), this protein is U4/U6 small nuclear ribonucleoprotein Prp31 (prpf31).